The following is a 90-amino-acid chain: UPF0335 protein RPD_1405 (90 aa).

It belongs to the UPF0335 family.

The polypeptide is UPF0335 protein RPD_1405 (Rhodopseudomonas palustris (strain BisB5)).